Consider the following 274-residue polypeptide: Shikimate dehydrogenase (NADP(+)) (274 aa).

Shikimate is bound by residues 14-16 (SQS) and T61. K65 serves as the catalytic Proton acceptor. Shikimate-binding residues include N86 and D102. Residues 128–132 (GAGGA), 151–156 (NRTVEK), and L215 contribute to the NADP(+) site. Shikimate is bound at residue Y217. G239 contacts NADP(+).

The protein belongs to the shikimate dehydrogenase family. As to quaternary structure, homodimer.

It carries out the reaction shikimate + NADP(+) = 3-dehydroshikimate + NADPH + H(+). Its pathway is metabolic intermediate biosynthesis; chorismate biosynthesis; chorismate from D-erythrose 4-phosphate and phosphoenolpyruvate: step 4/7. Involved in the biosynthesis of the chorismate, which leads to the biosynthesis of aromatic amino acids. Catalyzes the reversible NADPH linked reduction of 3-dehydroshikimate (DHSA) to yield shikimate (SA). This Proteus mirabilis (strain HI4320) protein is Shikimate dehydrogenase (NADP(+)).